The primary structure comprises 274 residues: Large ribosomal subunit protein uL2 (274 aa).

A disordered region spans residues Gly-222–Lys-257.

Belongs to the universal ribosomal protein uL2 family. Part of the 50S ribosomal subunit. Forms a bridge to the 30S subunit in the 70S ribosome.

Its function is as follows. One of the primary rRNA binding proteins. Required for association of the 30S and 50S subunits to form the 70S ribosome, for tRNA binding and peptide bond formation. It has been suggested to have peptidyltransferase activity; this is somewhat controversial. Makes several contacts with the 16S rRNA in the 70S ribosome. The chain is Large ribosomal subunit protein uL2 from Nitrosococcus oceani (strain ATCC 19707 / BCRC 17464 / JCM 30415 / NCIMB 11848 / C-107).